Consider the following 619-residue polypeptide: ATP-dependent zinc metalloprotease FtsH (619 aa).

Topologically, residues 1 to 11 are cytoplasmic; sequence MSNTDPQPPQK. Residues 12-32 form a helical membrane-spanning segment; the sequence is LPLNWVVWTLAVALMLYYLPA. The Periplasmic segment spans residues 33-120; sequence MRDRPEPAIK…EVKEGHDASS (88 aa). The helical transmembrane segment at 121-141 threads the bilayer; it reads SKVILLSYLPWIMFMIILFWL. Over 142–619 the chain is Cytoplasmic; it reads SRRTFRNFSG…IDECLQTGAS (478 aa). Residue 216 to 223 coordinates ATP; the sequence is GPPGTGKT. H437 serves as a coordination point for Zn(2+). E438 is a catalytic residue. Zn(2+) is bound by residues H441 and D513.

In the central section; belongs to the AAA ATPase family. The protein in the C-terminal section; belongs to the peptidase M41 family. Homohexamer. The cofactor is Zn(2+).

Its subcellular location is the cell inner membrane. Functionally, acts as a processive, ATP-dependent zinc metallopeptidase for both cytoplasmic and membrane proteins. Plays a role in the quality control of integral membrane proteins. The protein is ATP-dependent zinc metalloprotease FtsH of Hahella chejuensis (strain KCTC 2396).